Reading from the N-terminus, the 102-residue chain is Movement protein (102 aa).

A helical membrane pass occupies residues valine 43–phenylalanine 63. Residues isoleucine 82 to valine 102 are disordered.

Belongs to the mastrevirus movement protein family. Interacts with the capsid protein (CP). Part of a MP-CP-viral DNA complex.

The protein resides in the host membrane. Involved in the viral transport within, and between cells. The protein is Movement protein of Tobacco yellow dwarf virus (strain Australia) (TYDV).